Reading from the N-terminus, the 432-residue chain is D-amino acid dehydrogenase (432 aa).

3–17 (VVILGSGVVGVASAW) lines the FAD pocket.

It belongs to the DadA oxidoreductase family. FAD is required as a cofactor.

It catalyses the reaction a D-alpha-amino acid + A + H2O = a 2-oxocarboxylate + AH2 + NH4(+). It functions in the pathway amino-acid degradation; D-alanine degradation; NH(3) and pyruvate from D-alanine: step 1/1. Its function is as follows. Oxidative deamination of D-amino acids. The sequence is that of D-amino acid dehydrogenase from Shigella dysenteriae serotype 1 (strain Sd197).